Here is a 1095-residue protein sequence, read N- to C-terminus: DNA-directed RNA polymerase subunit beta'' (1095 aa).

Zn(2+)-binding residues include Cys-220, Cys-293, Cys-300, and Cys-303.

This sequence belongs to the RNA polymerase beta' chain family. RpoC2 subfamily. In plastids the minimal PEP RNA polymerase catalytic core is composed of four subunits: alpha, beta, beta', and beta''. When a (nuclear-encoded) sigma factor is associated with the core the holoenzyme is formed, which can initiate transcription. Zn(2+) is required as a cofactor.

The protein localises to the plastid. Its subcellular location is the chloroplast. It catalyses the reaction RNA(n) + a ribonucleoside 5'-triphosphate = RNA(n+1) + diphosphate. Its function is as follows. DNA-dependent RNA polymerase catalyzes the transcription of DNA into RNA using the four ribonucleoside triphosphates as substrates. This is DNA-directed RNA polymerase subunit beta'' from Zygnema circumcarinatum (Green alga).